The sequence spans 413 residues: 1-deoxy-D-xylulose 5-phosphate reductoisomerase (413 aa).

NADPH-binding residues include Thr-28, Gly-29, Ser-30, Ile-31, Gly-54, Arg-55, Asn-56, and Asn-142. Residue Lys-143 coordinates 1-deoxy-D-xylulose 5-phosphate. Residue Glu-144 participates in NADPH binding. Asp-168 provides a ligand contact to Mn(2+). Positions 169, 170, 194, and 217 each coordinate 1-deoxy-D-xylulose 5-phosphate. Glu-170 contacts Mn(2+). Gly-223 lines the NADPH pocket. Residues Ser-230, Asn-235, Lys-236, and Glu-239 each contribute to the 1-deoxy-D-xylulose 5-phosphate site. Glu-239 provides a ligand contact to Mn(2+).

It belongs to the DXR family. Mg(2+) serves as cofactor. It depends on Mn(2+) as a cofactor.

The enzyme catalyses 2-C-methyl-D-erythritol 4-phosphate + NADP(+) = 1-deoxy-D-xylulose 5-phosphate + NADPH + H(+). Its pathway is isoprenoid biosynthesis; isopentenyl diphosphate biosynthesis via DXP pathway; isopentenyl diphosphate from 1-deoxy-D-xylulose 5-phosphate: step 1/6. Functionally, catalyzes the NADPH-dependent rearrangement and reduction of 1-deoxy-D-xylulose-5-phosphate (DXP) to 2-C-methyl-D-erythritol 4-phosphate (MEP). The polypeptide is 1-deoxy-D-xylulose 5-phosphate reductoisomerase (Thermosynechococcus vestitus (strain NIES-2133 / IAM M-273 / BP-1)).